Reading from the N-terminus, the 110-residue chain is Glycine-rich selenoprotein (110 aa).

Over 1-20 the chain is Lumenal; the sequence is MVYIDHNGRVWEKRPWDWRR. Residues 21 to 41 traverse the membrane as a helical; Signal-anchor for type III membrane protein segment; that stretch reads IVELFVGIWFAIKQLFLTFLA. The Cytoplasmic segment spans residues 42–110; the sequence is PFTGNNNQAN…CNMPAGGGUG (69 aa). The disordered stretch occupies residues 51–110; sequence NPRRGNGWGGGGGWGGGGGGGGGGGGGRPGSGSGGLRPNRRIGRIQPTMSCNMPAGGGUG. Gly residues predominate over residues 56–85; that stretch reads NGWGGGGGWGGGGGGGGGGGGGRPGSGSGG. A non-standard amino acid (selenocysteine) is located at residue U109.

It localises to the golgi apparatus membrane. In terms of biological role, plays a role in the life span. May be involved in regulating the redox state of the cell and possesses anticarcinogenic properties. The sequence is that of Glycine-rich selenoprotein (SelG) from Drosophila melanogaster (Fruit fly).